A 558-amino-acid chain; its full sequence is Membrane protein insertase YidC (558 aa).

6 helical membrane passes run 6 to 26 (VIAA…FFQP), 326 to 348 (LAID…DYFF), 355 to 377 (GLAI…NFSF), 424 to 444 (LPIL…FVTI), 469 to 489 (VFGL…WPII), and 512 to 532 (IFMF…AGLV).

Belongs to the OXA1/ALB3/YidC family. Type 1 subfamily. Interacts with the Sec translocase complex via SecD. Specifically interacts with transmembrane segments of nascent integral membrane proteins during membrane integration.

It localises to the cell inner membrane. In terms of biological role, required for the insertion and/or proper folding and/or complex formation of integral membrane proteins into the membrane. Involved in integration of membrane proteins that insert both dependently and independently of the Sec translocase complex, as well as at least some lipoproteins. Aids folding of multispanning membrane proteins. The sequence is that of Membrane protein insertase YidC from Pelagibacter ubique (strain HTCC1062).